The sequence spans 103 residues: MTKSELIEILARRQAHLKSDDVDLAVKSLLEMMGQALSDGDRIEIRGFGSFSLHYRPPRLGRNPKTGESVALPGKHVPHFKPGKELRERVSSVVPVDMVDAAD.

The segment at 62-81 is disordered; sequence RNPKTGESVALPGKHVPHFK.

Belongs to the bacterial histone-like protein family. As to quaternary structure, heterodimer of an alpha and a beta chain.

Functionally, this protein is one of the two subunits of integration host factor, a specific DNA-binding protein that functions in genetic recombination as well as in transcriptional and translational control. The chain is Integration host factor subunit beta from Xanthomonas campestris pv. campestris (strain B100).